A 716-amino-acid chain; its full sequence is MGETKIIYHLDGQETPYLVKLPLPAERVTLADFKGVLQRPSYKFFFKSMDDDFGVVKEEISDDNAKLPCFNGRVVSWLVSAEGSHPDPAPFCADNPSELPPPMERTGGIGDSRPPSFHPHAGGGSQENLDNDTETDSLVSAQRERPRRRDGPEHATRLNGTAKGERRREPGGYDSSSTLMSSELETTSFFDSDEDDSTSRFSSSTEQSSASRLMRRHKRRRRKQKVSRIERSSSFSSITDSTMSLNIITVTLNMEKYNFLGISIVGQSNERGDGGIYIGSIMKGGAVAADGRIEPGDMLLQVNEINFENMSNDDAVRVLREIVHKPGPITLTVAKCWDPSPRGCFTLPRSEPIRPIDPAAWVSHTAAMTGTFPAYGMSPSLSTITSTSSSITSSIPDTERLDDFHLSIHSDMAAIVKAMASPESGLEVRDRMWLKITIPNAFIGSDVVDWLYHNVEGFTDRREARKYASNLLKAGFIRHTVNKITFSEQCYYIFGDLCGNMANLSLHDHDGSSGASDQDTLAPLPHPGAAPWPMAFPYQYPPPPHPYNPHPGFPELGYSYGGGSASSQHSEGSRSSGSNRSGSDRRKEKDPKAGDSKSGGSGSESDHTTRSSLRGPRERAPSERSGPAASEHSHRSHHSLASSLRSHHTHPSYGPPGVPPLYGPPMLMMPPPPAAMGPPGAPPGRDLASVPPELTASRQSFRMAMGNPSEFFVDVM.

The DIX domain occupies 1 to 82; it reads MGETKIIYHL…RVVSWLVSAE (82 aa). Arg-27 is subject to Omega-N-methylarginine. Residues Ser-48 and Ser-125 each carry the phosphoserine modification. A disordered region spans residues 85-235; it reads HPDPAPFCAD…VSRIERSSSF (151 aa). The span at 142 to 156 shows a compositional bias: basic and acidic residues; the sequence is QRERPRRRDGPEHAT. Residues 175–190 are compositionally biased toward low complexity; that stretch reads SSSTLMSSELETTSFF. Ser-192 bears the Phosphoserine mark. Over residues 199–212 the composition is skewed to low complexity; that stretch reads SRFSSSTEQSSASR. Omega-N-methylarginine is present on Arg-212. Residues 213-226 are compositionally biased toward basic residues; it reads LMRRHKRRRRKQKV. The PDZ domain maps to 249-321; it reads TVTLNMEKYN…NDDAVRVLRE (73 aa). Asymmetric dimethylarginine; by PRMT1; alternate is present on Arg-271. Symmetric dimethylarginine; by PRMT7; alternate is present on residues Arg-271 and Arg-342. Omega-N-methylarginine; alternate is present on Arg-342. At Thr-346 the chain carries Phosphothreonine. The 75-residue stretch at 422–496 folds into the DEP domain; that stretch reads PESGLEVRDR…SEQCYYIFGD (75 aa). Positions 546–691 are disordered; the sequence is PYNPHPGFPE…PPGRDLASVP (146 aa). Low complexity predominate over residues 565–581; that stretch reads ASSQHSEGSRSSGSNRS. Composition is skewed to basic and acidic residues over residues 582–595 and 604–622; these read GSDR…KAGD and ESDH…RAPS. Position 614 is a symmetric dimethylarginine; by PRMT7 (Arg-614). Pro residues predominate over residues 653-682; sequence YGPPGVPPLYGPPMLMMPPPPAAMGPPGAP. Ser-697 carries the phosphoserine modification. Arg-698 carries the post-translational modification Omega-N-methylarginine; alternate. Arg-698 carries the dimethylated arginine; alternate modification. Ser-700 carries the post-translational modification Phosphoserine.

This sequence belongs to the DSH family. In terms of assembly, interacts (via the PDZ domain) with the C-terminal regions of VANGL1 and VANGL2. Interacts (via the region containing both the PDZ and DEP domains) with LRRFIP2; the DIX domain may inhibit this interaction. Interacts with CYLD, CEP164 and DAB2. Interacts with DCDC2. Interacts with FOXK1 and FOXK2. Interacts with DAAM2. In terms of processing, ubiquitinated. Deubiquitinated by CYLD, which acts on 'Lys-63'-linked ubiquitin chains. Post-translationally, phosphorylated by CSNK1D. Arginine methylation may function as a switch in regulation of function in Wnt signaling.

The protein localises to the cytoplasm. Its function is as follows. Involved in the signal transduction pathway mediated by multiple Wnt genes. The protein is Segment polarity protein dishevelled homolog DVL-3 (DVL3) of Homo sapiens (Human).